A 309-amino-acid chain; its full sequence is MNILLANPRGFCAGVDRAISIVERALELFSPPIYVRHEVVHNRYVVQNLKDRGAVFVEELDQVPDESIVIFSAHGVSQAVRHEAKRRGLKVFDATCPLVTKVHLQVARASRKGIECILIGHAGHPEVEGTMGQYDNPAGGVHLVESPEDVANLVVKDPDNLCFVTQTTLSMDDTTDVIASLQSKYPSIEGPRKDDICYATQNRQDAVRNVAEKVELFIVVGSKNSSNSNRLRELAQKKGTTAFLVDNADDVDPSWFNGIQHVAVTAGASAPEVLVKQVVDAIAKMAPSVITEVEGRLEDTVFAVPAELR.

[4Fe-4S] cluster is bound at residue Cys12. (2E)-4-hydroxy-3-methylbut-2-enyl diphosphate is bound by residues His41 and His74. Residues His41 and His74 each contribute to the dimethylallyl diphosphate site. Residues His41 and His74 each coordinate isopentenyl diphosphate. Cys96 serves as a coordination point for [4Fe-4S] cluster. His124 is a (2E)-4-hydroxy-3-methylbut-2-enyl diphosphate binding site. His124 contacts dimethylallyl diphosphate. An isopentenyl diphosphate-binding site is contributed by His124. Glu126 functions as the Proton donor in the catalytic mechanism. Thr167 serves as a coordination point for (2E)-4-hydroxy-3-methylbut-2-enyl diphosphate. Cys197 provides a ligand contact to [4Fe-4S] cluster. (2E)-4-hydroxy-3-methylbut-2-enyl diphosphate contacts are provided by Ser225, Ser226, Asn227, and Ser269. 4 residues coordinate dimethylallyl diphosphate: Ser225, Ser226, Asn227, and Ser269. The isopentenyl diphosphate site is built by Ser225, Ser226, Asn227, and Ser269.

It belongs to the IspH family. [4Fe-4S] cluster is required as a cofactor.

The enzyme catalyses isopentenyl diphosphate + 2 oxidized [2Fe-2S]-[ferredoxin] + H2O = (2E)-4-hydroxy-3-methylbut-2-enyl diphosphate + 2 reduced [2Fe-2S]-[ferredoxin] + 2 H(+). The catalysed reaction is dimethylallyl diphosphate + 2 oxidized [2Fe-2S]-[ferredoxin] + H2O = (2E)-4-hydroxy-3-methylbut-2-enyl diphosphate + 2 reduced [2Fe-2S]-[ferredoxin] + 2 H(+). The protein operates within isoprenoid biosynthesis; dimethylallyl diphosphate biosynthesis; dimethylallyl diphosphate from (2E)-4-hydroxy-3-methylbutenyl diphosphate: step 1/1. It functions in the pathway isoprenoid biosynthesis; isopentenyl diphosphate biosynthesis via DXP pathway; isopentenyl diphosphate from 1-deoxy-D-xylulose 5-phosphate: step 6/6. In terms of biological role, catalyzes the conversion of 1-hydroxy-2-methyl-2-(E)-butenyl 4-diphosphate (HMBPP) into a mixture of isopentenyl diphosphate (IPP) and dimethylallyl diphosphate (DMAPP). Acts in the terminal step of the DOXP/MEP pathway for isoprenoid precursor biosynthesis. This is 4-hydroxy-3-methylbut-2-enyl diphosphate reductase from Shewanella halifaxensis (strain HAW-EB4).